Reading from the N-terminus, the 260-residue chain is Pyridoxine 5'-phosphate synthase (260 aa).

The 3-amino-2-oxopropyl phosphate site is built by asparagine 10 and arginine 21. The active-site Proton acceptor is histidine 46. 2 residues coordinate 1-deoxy-D-xylulose 5-phosphate: arginine 48 and histidine 53. Glutamate 76 (proton acceptor) is an active-site residue. 1-deoxy-D-xylulose 5-phosphate is bound at residue threonine 113. Catalysis depends on histidine 204, which acts as the Proton donor. Residues aspartate 205 and 227-228 each bind 3-amino-2-oxopropyl phosphate; that span reads GH.

The protein belongs to the PNP synthase family. As to quaternary structure, homooctamer; tetramer of dimers.

Its subcellular location is the cytoplasm. It carries out the reaction 3-amino-2-oxopropyl phosphate + 1-deoxy-D-xylulose 5-phosphate = pyridoxine 5'-phosphate + phosphate + 2 H2O + H(+). It participates in cofactor biosynthesis; pyridoxine 5'-phosphate biosynthesis; pyridoxine 5'-phosphate from D-erythrose 4-phosphate: step 5/5. Functionally, catalyzes the complicated ring closure reaction between the two acyclic compounds 1-deoxy-D-xylulose-5-phosphate (DXP) and 3-amino-2-oxopropyl phosphate (1-amino-acetone-3-phosphate or AAP) to form pyridoxine 5'-phosphate (PNP) and inorganic phosphate. This Xylella fastidiosa (strain 9a5c) protein is Pyridoxine 5'-phosphate synthase.